A 92-amino-acid polypeptide reads, in one-letter code: Putative septation protein SpoVG (92 aa).

The protein belongs to the SpoVG family.

Functionally, could be involved in septation. The protein is Putative septation protein SpoVG of Clostridium botulinum (strain Eklund 17B / Type B).